The following is a 948-amino-acid chain: FRIGIDA-like protein 5 (948 aa).

Positions 47–164 form a coiled coil; that stretch reads DSTRSVLEER…VEKHRERIVA (118 aa). Disordered stretches follow at residues 447–500, 518–538, and 804–894; these read ESAQ…APSQ, VKES…SGTE, and RNTS…YPSH. Basic and acidic residues-rich tracts occupy residues 459–475 and 518–527; these read SYEK…KSEA and VKESGADHQP. Positions 807–817 are enriched in low complexity; that stretch reads SNGSGSGSASS. The segment covering 818-830 has biased composition (polar residues); it reads KPDSTIKQSQTAK. A compositionally biased stretch (basic residues) spans 861 to 872; sequence FSKKNKRGKKRS. Over residues 873 to 894 the composition is skewed to polar residues; it reads MSGNNQSSGHIASHTSNHYPSH.

The protein belongs to the Frigida family. As to expression, expressed at low levels during seed development.

This is FRIGIDA-like protein 5 (FRL5) from Arabidopsis thaliana (Mouse-ear cress).